The following is a 31-amino-acid chain: Nemertide alpha-7 (31 aa).

3 disulfide bridges follow: cysteine 2–cysteine 16, cysteine 9–cysteine 20, and cysteine 15–cysteine 26. Proline 29 is subject to 4-hydroxyproline.

It belongs to the nemertide family. In terms of tissue distribution, confined to the epidermis and to the mucus layer.

The protein localises to the secreted. Functionally, potent toxin, demonstrating strong inhibitory effects on insect sodium channels (Nav) and reduced activity on mammalian sodium channels. Potently inhibits inactivation of insect sodium channels of B.germanica (BgNav1) (EC(50)=9.5 nM). The toxin also delays the inactivation of most mammalian Nav (human Nav1.1/SCN1A; EC(50)=171.5 nM, rat Nav1.2/SCN2A; EC(50)=50.4 nM, rat Nav1.3/SCN3A; EC(50)=170.2 nM, rat Nav1.4/SCN4A; EC(50)=810.6 nM, human Nav1.5/SCN5A; EC(50)=155.6 nM, mouse Nav1.6/SCN8A; EC(50)=147.6 nM, human Nav1.9/SCN9A; EC(50)=129 nM). Inactivation is completely prevented by a concentration of 1 uM, resulting in sustained, non-inactivating currents. In addition, the toxin significantly enhances the recovery from inactivation, and the open state is not required for the toxin to interact with the channel. In vivo, injection into brine shrimp (Artemia salina) stops movement or causes death after 24 hours (EC(50)=6.1 uM). This Lineus ruber (Red bootlace) protein is Nemertide alpha-7.